The chain runs to 264 residues: Proteasome subunit beta type-5 (264 aa).

Positions 1 to 59 are cleaved as a propeptide — removed in mature form; that stretch reads MALASVLQRPMPVNQHGFFGLGGGADLLDLGPGSPGDGLSLAAPSWGVPEEPRIEMLHG. Thr-60 (nucleophile) is an active-site residue. Residue Ala-108 participates in bortezomib binding.

Belongs to the peptidase T1B family. In terms of assembly, the 26S proteasome consists of a 20S proteasome core and two 19S regulatory subunits. The 20S proteasome core is a barrel-shaped complex made of 28 subunits that are arranged in four stacked rings. The two outer rings are each formed by seven alpha subunits, and the two inner rings are formed by seven beta subunits. The proteolytic activity is exerted by three beta-subunits PSMB5, PSMB6 and PSMB7. Directly interacts with POMP. Interacts with ABCB1 and TAP1. Expressed in uterus at the embryo implantation site.

It localises to the cytoplasm. Its subcellular location is the nucleus. The catalysed reaction is Cleavage of peptide bonds with very broad specificity.. Component of the 20S core proteasome complex involved in the proteolytic degradation of most intracellular proteins. This complex plays numerous essential roles within the cell by associating with different regulatory particles. Associated with two 19S regulatory particles, forms the 26S proteasome and thus participates in the ATP-dependent degradation of ubiquitinated proteins. The 26S proteasome plays a key role in the maintenance of protein homeostasis by removing misfolded or damaged proteins that could impair cellular functions, and by removing proteins whose functions are no longer required. Associated with the PA200 or PA28, the 20S proteasome mediates ubiquitin-independent protein degradation. This type of proteolysis is required in several pathways including spermatogenesis (20S-PA200 complex) or generation of a subset of MHC class I-presented antigenic peptides (20S-PA28 complex). Within the 20S core complex, PSMB5 displays a chymotrypsin-like activity. This chain is Proteasome subunit beta type-5 (Psmb5), found in Mus musculus (Mouse).